Consider the following 152-residue polypeptide: SsrA-binding protein (152 aa).

Belongs to the SmpB family.

The protein resides in the cytoplasm. Its function is as follows. Required for rescue of stalled ribosomes mediated by trans-translation. Binds to transfer-messenger RNA (tmRNA), required for stable association of tmRNA with ribosomes. tmRNA and SmpB together mimic tRNA shape, replacing the anticodon stem-loop with SmpB. tmRNA is encoded by the ssrA gene; the 2 termini fold to resemble tRNA(Ala) and it encodes a 'tag peptide', a short internal open reading frame. During trans-translation Ala-aminoacylated tmRNA acts like a tRNA, entering the A-site of stalled ribosomes, displacing the stalled mRNA. The ribosome then switches to translate the ORF on the tmRNA; the nascent peptide is terminated with the 'tag peptide' encoded by the tmRNA and targeted for degradation. The ribosome is freed to recommence translation, which seems to be the essential function of trans-translation. The sequence is that of SsrA-binding protein from Rickettsia typhi (strain ATCC VR-144 / Wilmington).